The primary structure comprises 72 residues: UPF0426 protein asl4034 (72 aa).

Belongs to the UPF0426 family.

The polypeptide is UPF0426 protein asl4034 (Nostoc sp. (strain PCC 7120 / SAG 25.82 / UTEX 2576)).